Reading from the N-terminus, the 468-residue chain is Dihydrolipoyl dehydrogenase (468 aa).

Residues 39–47 (EKGNLGGVC), K56, and A119 contribute to the FAD site. C47 and C52 form a disulfide bridge. NAD(+) is bound by residues 183–187 (GGGYI), E206, and 271–274 (TVGR). The FAD site is built by D314 and A322. H446 serves as the catalytic Proton acceptor.

The protein belongs to the class-I pyridine nucleotide-disulfide oxidoreductase family. In terms of assembly, homodimer. Requires FAD as cofactor.

It is found in the cytoplasm. The protein resides in the membrane. It catalyses the reaction N(6)-[(R)-dihydrolipoyl]-L-lysyl-[protein] + NAD(+) = N(6)-[(R)-lipoyl]-L-lysyl-[protein] + NADH + H(+). In terms of biological role, lipoamide dehydrogenase is a component of the alpha-ketoacid dehydrogenase complexes. The sequence is that of Dihydrolipoyl dehydrogenase (pdhD) from Staphylococcus aureus (strain COL).